The chain runs to 310 residues: Polyprenyl transferase ntnF (310 aa).

8 consecutive transmembrane segments (helical) span residues 30–50 (HTPEGLSTASIGWLALFFYAI), 63–83 (FLGIFACYQITHGVFCMWNDI), 110–130 (AMVAFIIGLALSLGVTYAMLG), 154–174 (IWAPQAVLGLTMAACVLPPWV), 185–205 (LPASLFGAIFSWLVYLDLIYA), 230–250 (ACLTVLGALQIAFFAVAAFEA), 255–275 (FLWVFGIAVWAISVPWSILSL), and 286–306 (IFLVNAILGIYLAAVSGTDVW).

The protein belongs to the UbiA prenyltransferase family. Requires Mg(2+) as cofactor.

The protein resides in the membrane. It participates in secondary metabolite biosynthesis; terpenoid biosynthesis. Its function is as follows. olyprenyl transferase; part of the gene cluster that mediates the biosynthesis of the meroterpenoids nectripenoids A and B, as well as cochliquninone D and isocochliquninone E. The pathway probably begins with the HR-PKS ntnH that catalyzes two chain-extension steps to form a reduced triketide, which then primes the SAT domain in the NR-PKS ntnG to initiate three more cycles of extension to give a linear hexaketide corresponding to the polyketide part of nectripenoids. The FAD-dependent monooxygenase ntnJ then performs an oxidative decarboxylation at C11 of the ntnH/ntnG product, via an electrophilic aromatic hydroxylation with concomitant ipso-decarboxylation. The membrane-bound polyprenyl transferase ntnF then introduces a farnesyl group before the FAD-dependent monooxygenase ntnK functions as the first epoxidase on terminal C12'-C13' olefin, followed by a second epoxidation on C7'-C8' catalyzed by ntnA. The terpene cyclase/mutase ntnI then initiates the sequential tricyclic ring formation through protonation of the terminal epoxide and catalyzes the regioselective and stereoselective 6/6/6-tricyclic ring formation. The cytochrome P450 monooxygenase ntnM may then hydroxylate C1'. The chain is Polyprenyl transferase ntnF from Nectria sp.